The chain runs to 158 residues: Superoxide dismutase [Cu-Zn] (158 aa).

Cu cation is bound by residues histidine 46, histidine 48, and histidine 63. Residues cysteine 57 and cysteine 149 are joined by a disulfide bond. The Zn(2+) site is built by histidine 63, histidine 71, histidine 80, and aspartate 83. Histidine 120 contacts Cu cation.

The protein belongs to the Cu-Zn superoxide dismutase family. In terms of assembly, homodimer. Cu cation is required as a cofactor. It depends on Zn(2+) as a cofactor.

It is found in the cytoplasm. It catalyses the reaction 2 superoxide + 2 H(+) = H2O2 + O2. Its function is as follows. Destroys radicals which are normally produced within the cells and which are toxic to biological systems. The chain is Superoxide dismutase [Cu-Zn] (SODC) from Brugia pahangi (Filarial nematode worm).